The primary structure comprises 449 residues: Type 3 secretion system ATPase (449 aa).

Residue 178–183 (GCGKTT) participates in ATP binding.

The protein belongs to the ATPase alpha/beta chains family. T3SS ATPase subfamily. As to quaternary structure, the core secretion machinery of the T3SS is composed of approximately 20 different proteins, including cytoplasmic components, a base, an export apparatus and a needle. This subunit is part of the cytosolic complex. Forms homododecamers. Comprises two hexameric rings that are probably stacked face-to-face by the association of their C-terminal domains. Also present as monomer and homohexamer in solution.

The protein localises to the cytoplasm. It catalyses the reaction ATP + H2O + cellular proteinSide 1 = ADP + phosphate + cellular proteinSide 2.. With respect to regulation, oligomerization increases ATPase activity. Its function is as follows. ATPase component of the type III secretion system (T3SS), also called injectisome, which is used to inject bacterial effector proteins into eukaryotic host cells. Acts as a molecular motor to provide the energy that is required for the export of proteins. Required for type III secretion apparatus (T3SA) formation, proper protein secretion, host cell invasion and virulence. May play a critical role in T3SS substrate recognition, disassembly of the effector/chaperone complex and unfolding of the effector in an ATP-dependent manner prior to secretion. This chain is Type 3 secretion system ATPase, found in Pseudomonas savastanoi pv. phaseolicola (Pseudomonas syringae pv. phaseolicola).